The primary structure comprises 423 residues: LysM domain-containing GPI-anchored protein 3 (423 aa).

The N-terminal stretch at 1 to 24 (MKNPEKPLLLFLILASSLASMATA) is a signal peptide. 4 disulfide bridges follow: Cys-31–Cys-97, Cys-37–Cys-160, Cys-95–Cys-158, and Cys-97–Cys-160. One can recognise a LysM 1 domain in the interval 107–154 (THYKTRTSDTLGSIADSVYGGLVSPEQIQVANSETDLSVLDVGTKLVI). Residue Asn-162 is glycosylated (N-linked (GlcNAc...) asparagine). Positions 173 to 216 (LSYVVRGIDTMAGIAKRFSTSVTDLTNVNAMGAPDINPGDILAV) constitute a LysM 2 domain. Disulfide bonds link Cys-221-Cys-253 and Cys-248-Cys-276. The N-linked (GlcNAc...) asparagine glycan is linked to Asn-238. A glycan (N-linked (GlcNAc...) asparagine) is linked at Asn-285. The GPI-anchor amidated glycine moiety is linked to residue Gly-394. The propeptide at 395–423 (GSISIASCPLSYYSFIALLIPIGSCFFVF) is removed in mature form.

Interacts with peptidoglycans.

It is found in the cell membrane. In terms of biological role, required as a cell surface receptor for peptidoglycan (PGN) elicitor signaling leading to innate immunity. Plays an essential role in detecting PGNs and restricting bacterial growth (of Pseudomonas syringae pv. tomato DC3000 for example). This Arabidopsis thaliana (Mouse-ear cress) protein is LysM domain-containing GPI-anchored protein 3 (LYM3).